Consider the following 222-residue polypeptide: MSGKPVLHYFNARGRMECIRWLLAAAGVEFEEKLIQSPEDLEKLKKDGNLMFDQVPMVEIDGMKLAQTRAILNYIATKYDLYGKDMKERALIDMYSEGILDLTEMIIQLVICPPDQREAKTALAKDRTKNRYLPAFEKVLKSHGQDYLVGNRLTRVDIHLLELLLYVEEFDASLLTSFPLLKAFKSRISSLPNVKKFLQPGSQRKPAMDAKQIEEARKVFKF.

Residues 3–83 (GKPVLHYFNA…YIATKYDLYG (81 aa)) form the GST N-terminal domain. K4 carries the N6-succinyllysine modification. Residues Y9, K45, 54 to 55 (QV), and 67 to 68 (QT) contribute to the glutathione site. The GST C-terminal domain occupies 85-208 (DMKERALIDM…QPGSQRKPAM (124 aa)).

Belongs to the GST superfamily. Alpha family. As to quaternary structure, homodimer or heterodimer of GSTA1 and GSTA2.

It localises to the cytoplasm. The catalysed reaction is RX + glutathione = an S-substituted glutathione + a halide anion + H(+). Functionally, catalyzes the conjugation of glutathione to a large variety of electrophilic compounds. This chain is Glutathione S-transferase alpha-2 (Gsta2), found in Rattus norvegicus (Rat).